A 466-amino-acid chain; its full sequence is Glutamate--tRNA ligase 1 (466 aa).

The short motif at P10–N20 is the 'HIGH' region element. The Zn(2+) site is built by C103, C105, C130, and H132. Residues P247 to R251 carry the 'KMSKS' region motif. K250 is a binding site for ATP.

Belongs to the class-I aminoacyl-tRNA synthetase family. Glutamate--tRNA ligase type 1 subfamily. In terms of assembly, monomer. Zn(2+) is required as a cofactor.

It is found in the cytoplasm. The catalysed reaction is tRNA(Glu) + L-glutamate + ATP = L-glutamyl-tRNA(Glu) + AMP + diphosphate. Functionally, catalyzes the attachment of glutamate to tRNA(Glu) in a two-step reaction: glutamate is first activated by ATP to form Glu-AMP and then transferred to the acceptor end of tRNA(Glu). In Methylococcus capsulatus (strain ATCC 33009 / NCIMB 11132 / Bath), this protein is Glutamate--tRNA ligase 1.